Here is an 828-residue protein sequence, read N- to C-terminus: Periplasmic nitrate reductase (828 aa).

The tat-type signal signal peptide spans 1–31 (MKLSRRSFMKANAVAAAAAAAGLSVPGVARA). One can recognise a 4Fe-4S Mo/W bis-MGD-type domain in the interval 39 to 95 (IKWDKAPCRFCGTGCGVLVGTQQGRVVACQGDPDAPVNRGLNCIKGYFLPKIMYGKD). [4Fe-4S] cluster contacts are provided by Cys-46, Cys-49, Cys-53, and Cys-81. Residues Lys-83, Gln-150, Asn-175, Cys-179, 212–219 (WGSNMAEM), 243–247 (STFQH), 262–264 (QSD), Met-372, Gln-376, Asn-482, 508–509 (SD), Lys-531, Asp-558, and 718–727 (TGRVLEHWHT) contribute to the Mo-bis(molybdopterin guanine dinucleotide) site. Substrate is bound at residue Phe-794. Residues Asn-802 and Lys-819 each contribute to the Mo-bis(molybdopterin guanine dinucleotide) site.

Belongs to the prokaryotic molybdopterin-containing oxidoreductase family. NasA/NapA/NarB subfamily. Component of the periplasmic nitrate reductase NapAB complex composed of NapA and NapB. [4Fe-4S] cluster serves as cofactor. Requires Mo-bis(molybdopterin guanine dinucleotide) as cofactor. In terms of processing, predicted to be exported by the Tat system. The position of the signal peptide cleavage has not been experimentally proven.

It localises to the periplasm. It catalyses the reaction 2 Fe(II)-[cytochrome] + nitrate + 2 H(+) = 2 Fe(III)-[cytochrome] + nitrite + H2O. Functionally, catalytic subunit of the periplasmic nitrate reductase complex NapAB. Receives electrons from NapB and catalyzes the reduction of nitrate to nitrite. This chain is Periplasmic nitrate reductase, found in Salmonella paratyphi C (strain RKS4594).